Here is a 339-residue protein sequence, read N- to C-terminus: Anthranilate phosphoribosyltransferase (339 aa).

5-phospho-alpha-D-ribose 1-diphosphate is bound by residues glycine 81, 84-85 (GD), serine 89, 91-94 (NVSS), 109-117 (KHGNRALSS), and alanine 121. Glycine 81 contacts anthranilate. Mg(2+) is bound at residue serine 93. Anthranilate is bound at residue asparagine 112. Arginine 167 serves as a coordination point for anthranilate. Positions 225 and 226 each coordinate Mg(2+).

The protein belongs to the anthranilate phosphoribosyltransferase family. Homodimer. The cofactor is Mg(2+).

It catalyses the reaction N-(5-phospho-beta-D-ribosyl)anthranilate + diphosphate = 5-phospho-alpha-D-ribose 1-diphosphate + anthranilate. The protein operates within amino-acid biosynthesis; L-tryptophan biosynthesis; L-tryptophan from chorismate: step 2/5. In terms of biological role, catalyzes the transfer of the phosphoribosyl group of 5-phosphorylribose-1-pyrophosphate (PRPP) to anthranilate to yield N-(5'-phosphoribosyl)-anthranilate (PRA). In Brucella suis (strain ATCC 23445 / NCTC 10510), this protein is Anthranilate phosphoribosyltransferase.